Consider the following 309-residue polypeptide: ATP synthase gamma chain (309 aa).

Belongs to the ATPase gamma chain family. As to quaternary structure, F-type ATPases have 2 components, CF(1) - the catalytic core - and CF(0) - the membrane proton channel. CF(1) has five subunits: alpha(3), beta(3), gamma(1), delta(1), epsilon(1). CF(0) has three main subunits: a, b and c.

The protein resides in the cell membrane. Produces ATP from ADP in the presence of a proton gradient across the membrane. The gamma chain is believed to be important in regulating ATPase activity and the flow of protons through the CF(0) complex. The chain is ATP synthase gamma chain from Salinispora tropica (strain ATCC BAA-916 / DSM 44818 / JCM 13857 / NBRC 105044 / CNB-440).